Reading from the N-terminus, the 533-residue chain is Glucose-6-phosphate isomerase (533 aa).

Residue E341 is the Proton donor of the active site. Catalysis depends on residues H372 and K501.

The protein belongs to the GPI family.

It localises to the cytoplasm. It carries out the reaction alpha-D-glucose 6-phosphate = beta-D-fructose 6-phosphate. The protein operates within carbohydrate biosynthesis; gluconeogenesis. It participates in carbohydrate degradation; glycolysis; D-glyceraldehyde 3-phosphate and glycerone phosphate from D-glucose: step 2/4. Its function is as follows. Catalyzes the reversible isomerization of glucose-6-phosphate to fructose-6-phosphate. The sequence is that of Glucose-6-phosphate isomerase from Cereibacter sphaeroides (strain KD131 / KCTC 12085) (Rhodobacter sphaeroides).